A 282-amino-acid polypeptide reads, in one-letter code: 1D-myo-inositol 2-acetamido-2-deoxy-alpha-D-glucopyranoside deacetylase (282 aa).

Zn(2+)-binding residues include H6, D9, and H141.

It belongs to the MshB deacetylase family. Requires Zn(2+) as cofactor.

It carries out the reaction 1D-myo-inositol 2-acetamido-2-deoxy-alpha-D-glucopyranoside + H2O = 1D-myo-inositol 2-amino-2-deoxy-alpha-D-glucopyranoside + acetate. In terms of biological role, catalyzes the deacetylation of 1D-myo-inositol 2-acetamido-2-deoxy-alpha-D-glucopyranoside (GlcNAc-Ins) in the mycothiol biosynthesis pathway. The sequence is that of 1D-myo-inositol 2-acetamido-2-deoxy-alpha-D-glucopyranoside deacetylase from Nocardiopsis dassonvillei (strain ATCC 23218 / DSM 43111 / CIP 107115 / JCM 7437 / KCTC 9190 / NBRC 14626 / NCTC 10488 / NRRL B-5397 / IMRU 509) (Actinomadura dassonvillei).